Reading from the N-terminus, the 153-residue chain is Aspartate carbamoyltransferase regulatory chain (153 aa).

Positions 108, 113, 137, and 140 each coordinate Zn(2+).

The protein belongs to the PyrI family. In terms of assembly, contains catalytic and regulatory chains. The cofactor is Zn(2+).

In terms of biological role, involved in allosteric regulation of aspartate carbamoyltransferase. The sequence is that of Aspartate carbamoyltransferase regulatory chain from Methanosphaera stadtmanae (strain ATCC 43021 / DSM 3091 / JCM 11832 / MCB-3).